Reading from the N-terminus, the 146-residue chain is Large ribosomal subunit protein uL15 (146 aa).

Residues Met1–Pro62 form a disordered region. Positions Thr10–Arg21 are enriched in basic residues. The segment covering Thr42 to Gly52 has biased composition (gly residues).

It belongs to the universal ribosomal protein uL15 family. Part of the 50S ribosomal subunit.

Functionally, binds to the 23S rRNA. This is Large ribosomal subunit protein uL15 from Natranaerobius thermophilus (strain ATCC BAA-1301 / DSM 18059 / JW/NM-WN-LF).